A 300-amino-acid chain; its full sequence is Ubiquitin carboxyl-terminal hydrolase 2 (300 aa).

Residues S2–K220 enclose the UCH catalytic domain. C83 acts as the Nucleophile in catalysis. The active-site Proton donor is H159. Positions N261–A290 constitute a ULD domain.

This sequence belongs to the peptidase C12 family. In terms of assembly, component of the 26S proteasome. Interacts with rpn10.

The protein localises to the nucleus. It catalyses the reaction Thiol-dependent hydrolysis of ester, thioester, amide, peptide and isopeptide bonds formed by the C-terminal Gly of ubiquitin (a 76-residue protein attached to proteins as an intracellular targeting signal).. Ubiquitin-protein hydrolase is involved both in the processing of ubiquitin precursors and of ubiquitinated proteins. This enzyme is a thiol protease that recognizes and hydrolyzes a peptide bond at the C-terminal glycine of ubiquitin. The protein is Ubiquitin carboxyl-terminal hydrolase 2 (uch2) of Schizosaccharomyces pombe (strain 972 / ATCC 24843) (Fission yeast).